The following is a 120-amino-acid chain: Large ribosomal subunit protein bL17 (120 aa).

Belongs to the bacterial ribosomal protein bL17 family. As to quaternary structure, part of the 50S ribosomal subunit. Contacts protein L32.

This is Large ribosomal subunit protein bL17 from Bacillus licheniformis (strain ATCC 14580 / DSM 13 / JCM 2505 / CCUG 7422 / NBRC 12200 / NCIMB 9375 / NCTC 10341 / NRRL NRS-1264 / Gibson 46).